Consider the following 140-residue polypeptide: Ribosome maturation factor RimP (140 aa).

The protein belongs to the RimP family.

The protein localises to the cytoplasm. Functionally, required for maturation of 30S ribosomal subunits. The sequence is that of Ribosome maturation factor RimP from Campylobacter jejuni subsp. doylei (strain ATCC BAA-1458 / RM4099 / 269.97).